A 67-amino-acid polypeptide reads, in one-letter code: Beta-mammal toxin CeII9 (67 aa).

One can recognise an LCN-type CS-alpha/beta domain in the interval 1-66; it reads KEGYLVNHST…VWPLPKKTCN (66 aa). Cystine bridges form between cysteine 12–cysteine 65, cysteine 16–cysteine 41, cysteine 25–cysteine 46, and cysteine 29–cysteine 48.

This sequence belongs to the long (4 C-C) scorpion toxin superfamily. Sodium channel inhibitor family. Beta subfamily. Expressed by the venom gland.

It localises to the secreted. In terms of biological role, beta toxins bind at site-4 of sodium channels and shift the voltage of activation toward more negative potentials thereby affecting sodium channel activation and promoting spontaneous and repetitive firing. This toxin is active against mammals and lethal to mice. Selectively modulates Nav1.4/SCN4A, a sodium channel present in both denervated and innervated skeletal muscle. The protein is Beta-mammal toxin CeII9 of Centruroides elegans (Bark scorpion).